Consider the following 266-residue polypeptide: Glucosamine-6-phosphate deaminase (266 aa).

The active-site Proton acceptor; for enolization step is Asp-72. Asp-141 (for ring-opening step) is an active-site residue. His-143 functions as the Proton acceptor; for ring-opening step in the catalytic mechanism. The For ring-opening step role is filled by Glu-148.

This sequence belongs to the glucosamine/galactosamine-6-phosphate isomerase family. NagB subfamily. Homohexamer.

The enzyme catalyses alpha-D-glucosamine 6-phosphate + H2O = beta-D-fructose 6-phosphate + NH4(+). Its pathway is amino-sugar metabolism; N-acetylneuraminate degradation; D-fructose 6-phosphate from N-acetylneuraminate: step 5/5. With respect to regulation, allosterically activated by N-acetylglucosamine 6-phosphate (GlcNAc6P). Functionally, catalyzes the reversible isomerization-deamination of glucosamine 6-phosphate (GlcN6P) to form fructose 6-phosphate (Fru6P) and ammonium ion. This is Glucosamine-6-phosphate deaminase from Serratia proteamaculans (strain 568).